An 83-amino-acid polypeptide reads, in one-letter code: uncharacterized protein (83 aa).

3 helical membrane-spanning segments follow: residues 5-22 (VLLSIIIFLGINQNVYSI), 32-49 (IIKIVIILGIVILIFSPA), and 56-78 (IGTILGLACAYFTYKYIIPIFIA).

The protein resides in the cell membrane. This is an uncharacterized protein from Rickettsia prowazekii (strain Madrid E).